The following is a 123-amino-acid chain: Large ribosomal subunit protein eL8 (123 aa).

Belongs to the eukaryotic ribosomal protein eL8 family. As to quaternary structure, part of the 50S ribosomal subunit. Probably part of the RNase P complex.

Its subcellular location is the cytoplasm. In terms of biological role, multifunctional RNA-binding protein that recognizes the K-turn motif in ribosomal RNA, the RNA component of RNase P, box H/ACA, box C/D and box C'/D' sRNAs. This chain is Large ribosomal subunit protein eL8, found in Methanosphaera stadtmanae (strain ATCC 43021 / DSM 3091 / JCM 11832 / MCB-3).